We begin with the raw amino-acid sequence, 87 residues long: Phytosulfokines 1 (87 aa).

An N-terminal signal peptide occupies residues 1–24 (MMKTKSEVLIFFFTLVLLLSMASS). Residues 25–76 (VILREDGFAPPKPSPTTHEKASTKGDRDGVECKNSDSEEECLVKKTVAAHTD) constitute a propeptide that is removed on maturation. The tract at residues 31 to 59 (GFAPPKPSPTTHEKASTKGDRDGVECKNS) is disordered. Residues 41–59 (THEKASTKGDRDGVECKNS) show a composition bias toward basic and acidic residues. 2 positions are modified to sulfotyrosine: Y77 and Y79. Positions 82–87 (DLNLSP) are excised as a propeptide.

It belongs to the phytosulfokine family. In terms of processing, sulfation is important for activity and for the binding to a putative membrane receptor. PSK-beta is produced from PSK-alpha by exopeptidase digestion. As to expression, expressed only in roots.

It localises to the secreted. Functionally, promotes plant cell differentiation, organogenesis and somatic embryogenesis as well as cell proliferation. This chain is Phytosulfokines 1 (PSK1), found in Arabidopsis thaliana (Mouse-ear cress).